The sequence spans 119 residues: Large ribosomal subunit protein uL18 (119 aa).

Belongs to the universal ribosomal protein uL18 family. As to quaternary structure, part of the 50S ribosomal subunit; part of the 5S rRNA/L5/L18/L25 subcomplex. Contacts the 5S and 23S rRNAs.

In terms of biological role, this is one of the proteins that bind and probably mediate the attachment of the 5S RNA into the large ribosomal subunit, where it forms part of the central protuberance. The protein is Large ribosomal subunit protein uL18 of Mycoplasmoides gallisepticum (strain R(low / passage 15 / clone 2)) (Mycoplasma gallisepticum).